Consider the following 1181-residue polypeptide: HEAT repeat-containing protein 6 (1181 aa).

The HEAT 1 repeat unit spans residues 159–198; that stretch reads LELLGETGLLMKLSDLAQSDPEVRRAAVHCMANLCLSVPG. Disordered stretches follow at residues 294-347 and 371-407; these read DGRT…PVTG and LDGS…AEGG. Positions 300-312 are enriched in polar residues; it reads KPQQSESSASRPT. Residues 313–325 show a composition bias toward basic residues; sequence LNKKKKSKVKPKK. Residues serine 336, serine 337, serine 399, and serine 402 each carry the phosphoserine modification. The span at 383–399 shows a compositional bias: low complexity; that stretch reads SSPFSSSSWKRVSSSES. HEAT repeat units follow at residues 452-490, 514-552, and 558-595; these read ELGS…GSKQ, SSIR…DAPY, and SLLT…THAP. A disordered region spans residues 613 to 648; sequence NSNSATPHLSPPDWWKKAPAGPSLEETSVSSPKGSS. Threonine 618 is modified (phosphothreonine). Residues 637–646 are compositionally biased toward polar residues; that stretch reads EETSVSSPKG. Position 643 is a phosphoserine (serine 643).

This Pongo abelii (Sumatran orangutan) protein is HEAT repeat-containing protein 6 (HEATR6).